Reading from the N-terminus, the 287-residue chain is Phosphatidylserine decarboxylase proenzyme (287 aa).

Catalysis depends on charge relay system; for autoendoproteolytic cleavage activity residues D90, H147, and S252. Catalysis depends on S252, which acts as the Schiff-base intermediate with substrate; via pyruvic acid; for decarboxylase activity. The residue at position 252 (S252) is a Pyruvic acid (Ser); by autocatalysis.

The protein belongs to the phosphatidylserine decarboxylase family. PSD-B subfamily. Prokaryotic type I sub-subfamily. In terms of assembly, heterodimer of a large membrane-associated beta subunit and a small pyruvoyl-containing alpha subunit. Pyruvate serves as cofactor. In terms of processing, is synthesized initially as an inactive proenzyme. Formation of the active enzyme involves a self-maturation process in which the active site pyruvoyl group is generated from an internal serine residue via an autocatalytic post-translational modification. Two non-identical subunits are generated from the proenzyme in this reaction, and the pyruvate is formed at the N-terminus of the alpha chain, which is derived from the carboxyl end of the proenzyme. The autoendoproteolytic cleavage occurs by a canonical serine protease mechanism, in which the side chain hydroxyl group of the serine supplies its oxygen atom to form the C-terminus of the beta chain, while the remainder of the serine residue undergoes an oxidative deamination to produce ammonia and the pyruvoyl prosthetic group on the alpha chain. During this reaction, the Ser that is part of the protease active site of the proenzyme becomes the pyruvoyl prosthetic group, which constitutes an essential element of the active site of the mature decarboxylase.

The protein localises to the cell membrane. The enzyme catalyses a 1,2-diacyl-sn-glycero-3-phospho-L-serine + H(+) = a 1,2-diacyl-sn-glycero-3-phosphoethanolamine + CO2. Its pathway is phospholipid metabolism; phosphatidylethanolamine biosynthesis; phosphatidylethanolamine from CDP-diacylglycerol: step 2/2. Its function is as follows. Catalyzes the formation of phosphatidylethanolamine (PtdEtn) from phosphatidylserine (PtdSer). The sequence is that of Phosphatidylserine decarboxylase proenzyme from Pseudomonas putida (strain ATCC 700007 / DSM 6899 / JCM 31910 / BCRC 17059 / LMG 24140 / F1).